A 785-amino-acid chain; its full sequence is Rho-GTPase-activating protein RGD3 (785 aa).

Serine 2 is modified (N-acetylserine). Positions isoleucine 31–arginine 463 constitute an F-BAR domain. The interval serine 313–asparagine 340 is disordered. The segment covering threonine 329–serine 339 has biased composition (basic and acidic residues). One can recognise a Rho-GAP domain in the interval isoleucine 520–glutamate 702. The segment at threonine 732 to threonine 785 is disordered. Residue serine 759 is modified to Phosphoserine. Threonine 760, threonine 762, and threonine 763 each carry phosphothreonine.

In terms of processing, phosphorylation at the C-terminus negatively regulates the activity and the polarized localization.

Its subcellular location is the cytoplasmic vesicle membrane. The protein resides in the cell membrane. It localises to the bud tip. The protein localises to the bud neck. GTPase activating protein (GAP) for RHO3 and CDC42 that binds membranes through phosphatidylinositol 4,5-bisphosphate. Plays a key role in cell polarity. Modulates the RHO3 distribution at the plasma membrane and its polarity during growth. The polypeptide is Rho-GTPase-activating protein RGD3 (Saccharomyces cerevisiae (strain ATCC 204508 / S288c) (Baker's yeast)).